A 518-amino-acid chain; its full sequence is Stage V sporulation protein B (518 aa).

The next 14 membrane-spanning stretches (helical) occupy residues 6 to 26 (FLKG…LGFV), 45 to 65 (MAAP…PVAI), 91 to 111 (ITGV…PVMA), 120 to 140 (TLYP…SSVL), 165 to 185 (ISLV…YAAA), 186 to 206 (GAML…FVCF), 250 to 270 (WFFE…ATVA), 281 to 301 (FAMT…TALV), 326 to 346 (LCLL…DELM), 348 to 368 (VMYG…FFLL), 387 to 407 (AAMM…FVLA), 411 to 431 (SLGI…VTLL), 446 to 466 (IKEY…SSAI), and 478 to 498 (VNLA…LLVF).

It belongs to the polysaccharide synthase family.

The protein localises to the cell membrane. Its function is as follows. Involved, directly or indirectly, in spore cortex biosynthesis. Affects only indirectly the expression of late sporulation genes. In Bacillus subtilis (strain 168), this protein is Stage V sporulation protein B (spoVB).